The sequence spans 257 residues: NAD-dependent protein deacetylase (257 aa).

The Deacetylase sirtuin-type domain maps to 3-252 (NGECLEGGRK…DLVLNEVKGI (250 aa)). Residues alanine 29, threonine 33, phenylalanine 40, arginine 41, glutamine 105, isoleucine 107, aspartate 108, and histidine 123 each contribute to the NAD(+) site. Phenylalanine 40 provides a ligand contact to nicotinamide. Isoleucine 107 and aspartate 108 together coordinate nicotinamide. Histidine 123 acts as the Proton acceptor in catalysis. Cysteine 131, cysteine 134, cysteine 156, and cysteine 159 together coordinate Zn(2+). Serine 195, serine 196, and asparagine 220 together coordinate NAD(+).

The protein belongs to the sirtuin family. Class U subfamily. Zn(2+) serves as cofactor.

Its subcellular location is the cytoplasm. It catalyses the reaction N(6)-acetyl-L-lysyl-[protein] + NAD(+) + H2O = 2''-O-acetyl-ADP-D-ribose + nicotinamide + L-lysyl-[protein]. NAD-dependent protein deacetylase which modulates the activities of several enzymes which are inactive in their acetylated form. Deacetylates the N-terminal lysine residue of Alba, the major archaeal chromatin protein and that, in turn, increases Alba's DNA binding affinity, thereby repressing transcription. The sequence is that of NAD-dependent protein deacetylase from Caldivirga maquilingensis (strain ATCC 700844 / DSM 13496 / JCM 10307 / IC-167).